The sequence spans 959 residues: MTQNLSQLEHNDAFIQRHIGSSVEQQQQMLAAVGASSLSTLIQQIVPADIQLPGPPPVGEAATEHQALAELKGIASQNQCYKSYIGMGYSPVLTPPVILRNMLENPGWYTAYTPYQPEVSQGRLEALLNFQQLTQDLTGLDLASASLLDEATAAAESMALAKRASKLKDANRFFVADDVHPQTLDVVLTRAETFGFDVIVDRAEKVLELDGIFGVLLQQVGTTGELHDYSALLAELKKRKIITSVAADIMALVLLTAPGAQGADVVFGSAQRFGVPMGYGGPHAAFFACRDEFKRSMPGRIIGVSRDAAGNTALRMAMQTREQHIRREKANSNICTSQVLLANIASLYAVYHGPQGLQRIAGRIHRMTDILAAGLQHAGLTLRFKHWFDTLTVEVKDKAAVLARALSFGINLRTDIHGAVGITLNETTSREDIQTLFALFVGDNHGLDIDQLDAAVSQHSQSIQDSMLRRDPILTHPVFNRYHSETEMMRYMHRLERKDLALNQAMIPLGSCTMKLNAAAEMIPITWPEFAELHPFCPPEQAAGYQQMIGQLSQWLVQLTGYDAVCMQPNSGAQGEYAGLLAIRRYHESRNQANRHICLIPSSAHGTNPASAQMAGMSVVVVACDKQGNIDLHDLRQKAEHAGDELSCIMVTYPSTHGVYEETIREVCQIVHQFGGQVYLDGANMNAQVGITTPGYIGADVSHLNLHKTFCIPHGGGGPGMGPIGVKAHLAPFVPGHSVVQIDGMTTQQGAVSAAPFGSASILPISWMYIRMMGADGLKQASQVAILNANYIATRLKNAYPVLYTGHDGRVAHECILDIRPLKEATGISEMDIAKRLIDFGFHAPTMSFPVAGTLMVEPTESESKVELDRFIDAMLAIRAEIEKVAQGEWPLEDNPLVNAPHTQAELVGEWTHPYSRELAVFPVAGVLENKYWPTVKRLDDVYGDRNLFCSCVPISDYE.

K708 is subject to N6-(pyridoxal phosphate)lysine.

It belongs to the GcvP family. As to quaternary structure, the glycine cleavage system is composed of four proteins: P, T, L and H. Pyridoxal 5'-phosphate is required as a cofactor.

The enzyme catalyses N(6)-[(R)-lipoyl]-L-lysyl-[glycine-cleavage complex H protein] + glycine + H(+) = N(6)-[(R)-S(8)-aminomethyldihydrolipoyl]-L-lysyl-[glycine-cleavage complex H protein] + CO2. Functionally, the glycine cleavage system catalyzes the degradation of glycine. The P protein binds the alpha-amino group of glycine through its pyridoxal phosphate cofactor; CO(2) is released and the remaining methylamine moiety is then transferred to the lipoamide cofactor of the H protein. The protein is Glycine dehydrogenase (decarboxylating) of Yersinia pseudotuberculosis serotype O:1b (strain IP 31758).